A 390-amino-acid chain; its full sequence is Flagellar P-ring protein (390 aa).

The signal sequence occupies residues 1–25 (MLLKKIFLTGIIVLDLVFFVSYGFA).

It belongs to the FlgI family. As to quaternary structure, the basal body constitutes a major portion of the flagellar organelle and consists of four rings (L,P,S, and M) mounted on a central rod.

The protein resides in the periplasm. It localises to the bacterial flagellum basal body. Its function is as follows. Assembles around the rod to form the L-ring and probably protects the motor/basal body from shearing forces during rotation. The polypeptide is Flagellar P-ring protein (Syntrophus aciditrophicus (strain SB)).